The chain runs to 588 residues: DELLA protein GAI (588 aa).

The span at 1 to 15 shows a compositional bias: basic and acidic residues; that stretch reads MKRDRDRDREREKRA. Residues 1-38 form a disordered region; sequence MKRDRDRDREREKRAFSNGAVSSGKSKIWEEDEEEKPD. The DELLA motif signature appears at 42–46; that stretch reads DELLA. The interval 152–177 is disordered; sequence GAVFNSDSNKRHRSTTSSFSTTSSSM. The span at 166-177 shows a compositional bias: low complexity; that stretch reads TTSSFSTTSSSM. One can recognise a GRAS domain in the interval 190 to 574; it reads VDSQETGVRL…RPLIATSAWK (385 aa). The leucine repeat I (LRI) stretch occupies residues 197–251; it reads VRLVHTLMACAEAVQQENLTLADQLVRHIGILAVSQSGAMRKVATYFAEALARRI. The segment at 269–334 is VHIID; it reads QMHFYETCPY…GGPPAFRLTG (66 aa). A VHIID motif is present at residues 300–304; that stretch reads VHVID. The leucine repeat II (LRII) stretch occupies residues 348-380; the sequence is QVGWKLAQLAETIGVEFEFRGFVANSLADLDAT. The PFYRE stretch occupies residues 392 to 495; it reads VAINSVFELH…EVYLGRQICN (104 aa). The LXXLL motif signature appears at 400–404; it reads LHRLL. An SAW region spans residues 498–574; that stretch reads ACEGSDRVER…RPLIATSAWK (77 aa).

It belongs to the GRAS family. DELLA subfamily. Post-translationally, phosphorylated. In terms of processing, ubiquitinated. Upon GA application it is ubiquitinated, leading to its subsequent degradation. Expressed in both vegetative and reproductive tissues.

It is found in the nucleus. In terms of biological role, probable transcriptional regulator that acts as a repressor of the gibberellin (GA) signaling pathway. Probably acts by participating in large multiprotein complexes that repress transcription of GA-inducible genes. Upon GA application, it is degraded by the proteasome, allowing the GA signaling pathway. Its degradation is not essential for germination. This Solanum lycopersicum (Tomato) protein is DELLA protein GAI (GAI).